A 436-amino-acid chain; its full sequence is GTPase Obg (436 aa).

The 159-residue stretch at 2-160 (SMFLDTAKVS…RELALELKIL (159 aa)) folds into the Obg domain. One can recognise an OBG-type G domain in the interval 161–338 (ADVGLVGFPS…LLDATAQLLA (178 aa)). Residues 167-174 (GFPSVGKS), 192-196 (FTTIV), 214-217 (DLPG), 284-287 (NKMD), and 319-321 (SGI) contribute to the GTP site. The Mg(2+) site is built by serine 174 and threonine 194. Positions 358-436 (GFEEEEKAFD…IGKFEFEFVD (79 aa)) constitute an OCT domain.

It belongs to the TRAFAC class OBG-HflX-like GTPase superfamily. OBG GTPase family. As to quaternary structure, monomer. Mg(2+) is required as a cofactor.

Its subcellular location is the cytoplasm. An essential GTPase which binds GTP, GDP and possibly (p)ppGpp with moderate affinity, with high nucleotide exchange rates and a fairly low GTP hydrolysis rate. Plays a role in control of the cell cycle, stress response, ribosome biogenesis and in those bacteria that undergo differentiation, in morphogenesis control. This Streptococcus mutans serotype c (strain ATCC 700610 / UA159) protein is GTPase Obg.